We begin with the raw amino-acid sequence, 233 residues long: 2-C-methyl-D-erythritol 4-phosphate cytidylyltransferase (233 aa).

The protein belongs to the IspD/TarI cytidylyltransferase family. IspD subfamily.

It carries out the reaction 2-C-methyl-D-erythritol 4-phosphate + CTP + H(+) = 4-CDP-2-C-methyl-D-erythritol + diphosphate. It participates in isoprenoid biosynthesis; isopentenyl diphosphate biosynthesis via DXP pathway; isopentenyl diphosphate from 1-deoxy-D-xylulose 5-phosphate: step 2/6. Functionally, catalyzes the formation of 4-diphosphocytidyl-2-C-methyl-D-erythritol from CTP and 2-C-methyl-D-erythritol 4-phosphate (MEP). This is 2-C-methyl-D-erythritol 4-phosphate cytidylyltransferase from Gloeobacter violaceus (strain ATCC 29082 / PCC 7421).